The following is a 329-amino-acid chain: Serpentine receptor class alpha-8 (329 aa).

The next 6 helical transmembrane spans lie at 26 to 46 (VDLITSFFTYMLSIIAIKMVL), 60 to 80 (FLNIFYANLYQIVYSIDVVVI), 141 to 161 (IFVGSFIAIVVMISTTSTGKL), 187 to 207 (TIHFYISTVVSLFNLAASVAL), 231 to 251 (VIESTETICFLNFTQFVFMFI), and 273 to 293 (FWVVWCYTVPFIALTFPLLLI).

The protein belongs to the nematode receptor-like protein sra family.

The protein localises to the membrane. The sequence is that of Serpentine receptor class alpha-8 (sra-8) from Caenorhabditis elegans.